A 200-amino-acid polypeptide reads, in one-letter code: Protein DMP7 (200 aa).

4 consecutive transmembrane segments (helical) span residues 37 to 57 (LSNLLPTGSVMSFQIMCPVLT), 69 to 89 (WLTCFLVSLCAISCFLFSFTD), 129 to 149 (ILDFIHAIMSMLVFFAVSMFD), and 167 to 187 (ILTSLPFVIGVICGAFFLAFP).

Belongs to the plant DMP1 protein family. As to expression, expressed in leaves, stems, flowers, siliques and roots, especially in the vasculature.

The protein resides in the endoplasmic reticulum membrane. Its function is as follows. Involved in membrane remodeling. This chain is Protein DMP7, found in Arabidopsis thaliana (Mouse-ear cress).